Here is a 236-residue protein sequence, read N- to C-terminus: Large ribosomal subunit protein uL3 (236 aa).

The protein belongs to the universal ribosomal protein uL3 family. Part of the 50S ribosomal subunit. Forms a cluster with proteins L14 and L19.

One of the primary rRNA binding proteins, it binds directly near the 3'-end of the 23S rRNA, where it nucleates assembly of the 50S subunit. The protein is Large ribosomal subunit protein uL3 of Anaeromyxobacter dehalogenans (strain 2CP-1 / ATCC BAA-258).